A 256-amino-acid chain; its full sequence is Thiazole synthase (256 aa).

Lys95 (schiff-base intermediate with DXP) is an active-site residue. Residues Gly156, 182-183 (AG), and 204-205 (NT) each bind 1-deoxy-D-xylulose 5-phosphate.

Belongs to the ThiG family. As to quaternary structure, homotetramer. Forms heterodimers with either ThiH or ThiS.

Its subcellular location is the cytoplasm. The enzyme catalyses [ThiS sulfur-carrier protein]-C-terminal-Gly-aminoethanethioate + 2-iminoacetate + 1-deoxy-D-xylulose 5-phosphate = [ThiS sulfur-carrier protein]-C-terminal Gly-Gly + 2-[(2R,5Z)-2-carboxy-4-methylthiazol-5(2H)-ylidene]ethyl phosphate + 2 H2O + H(+). Its pathway is cofactor biosynthesis; thiamine diphosphate biosynthesis. Functionally, catalyzes the rearrangement of 1-deoxy-D-xylulose 5-phosphate (DXP) to produce the thiazole phosphate moiety of thiamine. Sulfur is provided by the thiocarboxylate moiety of the carrier protein ThiS. In vitro, sulfur can be provided by H(2)S. In Escherichia coli O157:H7, this protein is Thiazole synthase.